Here is a 579-residue protein sequence, read N- to C-terminus: Putative fatty-acid--CoA ligase fadD21 (579 aa).

This sequence belongs to the ATP-dependent AMP-binding enzyme family.

This is Putative fatty-acid--CoA ligase fadD21 (fadD21) from Mycobacterium leprae (strain TN).